The sequence spans 607 residues: Chaperone protein DnaK (607 aa).

Phosphothreonine; by autocatalysis is present on Thr173. Composition is skewed to basic and acidic residues over residues 490-509 (EQNA…RNEA) and 524-542 (GDNV…KEAL). Disordered stretches follow at residues 490–510 (EQNA…NEAD), 524–555 (GDNV…EDIK), and 574–607 (QQAQ…KDNK). A compositionally biased stretch (polar residues) spans 574–587 (QQAQQGDAAGSNQS). Residues 595-607 (TEVKDDDDKKDNK) show a composition bias toward basic and acidic residues.

This sequence belongs to the heat shock protein 70 family.

Functionally, acts as a chaperone. The protein is Chaperone protein DnaK of Staphylococcus carnosus (strain TM300).